A 242-amino-acid chain; its full sequence is Ribonuclease PH (242 aa).

Phosphate-binding positions include Arg-89 and 127-129 (GTR).

Belongs to the RNase PH family. As to quaternary structure, homohexameric ring arranged as a trimer of dimers.

The catalysed reaction is tRNA(n+1) + phosphate = tRNA(n) + a ribonucleoside 5'-diphosphate. Phosphorolytic 3'-5' exoribonuclease that plays an important role in tRNA 3'-end maturation. Removes nucleotide residues following the 3'-CCA terminus of tRNAs; can also add nucleotides to the ends of RNA molecules by using nucleoside diphosphates as substrates, but this may not be physiologically important. Probably plays a role in initiation of 16S rRNA degradation (leading to ribosome degradation) during starvation. In Neisseria gonorrhoeae (strain ATCC 700825 / FA 1090), this protein is Ribonuclease PH.